A 365-amino-acid chain; its full sequence is Red-sensitive opsin (365 aa).

Residues 1–51 (MASQLNEAIFAARRRNDDDDTTRSSVFTYTNSNNTRGPFEGPNYHIAPRWV) lie on the Extracellular side of the membrane. The N-linked (GlcNAc...) asparagine glycan is linked to Asn33. Residues 52 to 76 (YNLTSIWMIFVVFASVFTNGLVIVA) traverse the membrane as a helical segment. The Cytoplasmic portion of the chain corresponds to 77 to 88 (TLKFKKLRHPLN). Residues 89-113 (WILVNMAIADLGETVIASTISVFNQ) traverse the membrane as a helical segment. At 114–128 (IFGYFILGHPMCVLE) the chain is on the extracellular side. Cys125 and Cys202 are disulfide-bonded. The helical transmembrane segment at 129–148 (GFTVSTCGITALWSLTVIAW) threads the bilayer. The Cytoplasmic portion of the chain corresponds to 149–167 (ERWFVVCKPFGNIKFDEKL). Residues 168-191 (AATGIIFSWVWSAGWCAPPMFGWS) form a helical membrane-spanning segment. Residues 192–217 (RFWPHGLKTSCGPDVFSGSSDPGVQS) are Extracellular-facing. A helical membrane pass occupies residues 218 to 245 (YMLVLMITCCIIPLAIIILCYLHVWWTI). Over 246–267 (RQVAQQQKESESTQKAEREVSR) the chain is Cytoplasmic. A helical transmembrane segment spans residues 268-291 (MVVVMIVAYIFCWGPYTFFACFAA). The Extracellular portion of the chain corresponds to 292-299 (FSPGYSFH). The helical transmembrane segment at 300-324 (PLAAALPAYFAKSATIYNPIIYVFM) threads the bilayer. Lys311 carries the post-translational modification N6-(retinylidene)lysine. At 325 to 365 (NRQFRNCIYQMFGKKVDDGSEVSSTSRTEVSSVSNSSVSPA) the chain is on the cytoplasmic side. The disordered stretch occupies residues 342 to 365 (DGSEVSSTSRTEVSSVSNSSVSPA). Low complexity predominate over residues 345–365 (EVSSTSRTEVSSVSNSSVSPA).

It belongs to the G-protein coupled receptor 1 family. Opsin subfamily. Phosphorylated on some or all of the serine and threonine residues present in the C-terminal region.

The protein resides in the membrane. Its function is as follows. Visual pigments are the light-absorbing molecules that mediate vision. They consist of an apoprotein, opsin, covalently linked to cis-retinal. This Xenopus laevis (African clawed frog) protein is Red-sensitive opsin (opn1lw1).